A 529-amino-acid chain; its full sequence is MDSQFLSVSRPQLDVSAWTPQKWFVQGALRSFEEWSAWQYIVTLLIAIITYDQVMYIWRKASIAGPAFKIPLMGPFLQALHPRFESYLEQWASGPLSCVSIFHKFVVLASDRDLAHKVFKSPTYAEPCIVPIAKDILGHKAWVFLQGKAHAEYRRGLTPLFTNKAMETYLPAQERVCADYFDKFVAASAANNGQPREFMTLFREINCALSLRTFFGDYISQDAVKKIADDFYLATAALELVNVPLSMYIPGTKPWRGKRTADAVHAEFARCAAACKANMATGSEPTCIVDHWVLHMMESSRYHARVAAGEEGVEKPTNVIREFSNQEISETLFTFLFASQDASSSATTWLFQILAQRPDVLSRLREENLAARNGDRFKPFDLPMLESLPYTTAVIKELLRHRPPVIFVPYLATKPFPITPSYTVPKNSMIIPSCYPALHDPEAYPNPEVFDPDRWITGDAEKQTKNWLVFGAGPHDCLARRYVPLSMAGMIGKAALELDWVHHPTERSEEIRVFATLFPMDGCQLVFSK.

A helical transmembrane segment spans residues 38-58 (WQYIVTLLIAIITYDQVMYIW). Position 477 (C477) interacts with heme.

The protein belongs to the cytochrome P450 family. It depends on heme as a cofactor.

It localises to the membrane. The protein operates within secondary metabolite biosynthesis; terpenoid biosynthesis. Cytochrome P450 monooxygenase; part of the gene cluster that mediates the biosynthesis of the sesterterpenes ophiobolins, fungal phytotoxins with potential anti-cancer activities. The first step of the pathway is performed by the sesterterpene synthase oblA that possesses both prenyl transferase and terpene cyclase activity, converting isopentenyl diphosphate and dimethylallyl diphosphate into geranylfarnesyl diphosphate (GFPP) and further converting GFPP into ophiobolin F, respectively. Other sesterterpenoids (C(25) terpenoids) are found as minor products of oblA. The cytochrome P450 monooxygenase oblB then catalyzes a four-step oxidative transformation of ophiobolin F to yield ophiobolin C. The function of the cytochrome P450 monooxygenase oblE has still to be determined. The sequence is that of Cytochrome P450 monooxygenase oblE from Emericella variicolor (Aspergillus stellatus).